The following is a 544-amino-acid chain: MSAKEIRFSTDARDRLLRGVELLNNAVKVTLGPKGRNVVIDKAYGAPRITKDGVSVAKEIELEDKFENMGAQMVREVASKTNDLAGDGTTTATVLAASIFREGAKLVAAGMNPMDLRRGIDLGVIAVVKEIKARAMKVKSSGEIAQVGTIAANGDATIGEMIARAMDKVGNEGVITVEEARTAETELDVVEGMQFDRGYLSPYFVTNAEKMRVELEEPYILVHEKKLGSLQALLPILEAVVQTGKPLLLISEDVEGEALATLVVNKLRGGLKVAAVKAPGFGDRRKAMLEDIAVLTAGQMISEDLGIKLENVTLDMLGHAKRVLIDKESTTIIDGSGEKAAIQARIQQIKAQIEDTTSDYDKEKLQERLAKLAGGVAVIRVGGATETEVKEKKDRIDDALNATRAAVEEGIVPGGGVALLRAKSALTGLTGENADVTAGISIVLRALEAPIRQIVDNAGFEGSIVVGKLAGSNDHNQGFDAQTETYVDMIEAGIVDPAKVVRTALQDAGSIAALLITAEVMIADIPAKDSAPAAGNGGMGAMGY.

ATP is bound by residues 30–33 (TLGP), lysine 51, 87–91 (DGTTT), glycine 415, and aspartate 496.

Belongs to the chaperonin (HSP60) family. As to quaternary structure, forms a cylinder of 14 subunits composed of two heptameric rings stacked back-to-back. Interacts with the co-chaperonin GroES.

It localises to the cytoplasm. The enzyme catalyses ATP + H2O + a folded polypeptide = ADP + phosphate + an unfolded polypeptide.. Functionally, together with its co-chaperonin GroES, plays an essential role in assisting protein folding. The GroEL-GroES system forms a nano-cage that allows encapsulation of the non-native substrate proteins and provides a physical environment optimized to promote and accelerate protein folding. The polypeptide is Chaperonin GroEL 2 (Rhizobium johnstonii (strain DSM 114642 / LMG 32736 / 3841) (Rhizobium leguminosarum bv. viciae)).